We begin with the raw amino-acid sequence, 66 residues long: ATP synthase subunit c (66 aa).

2 consecutive transmembrane segments (helical) span residues 3 to 23 (LTFLGLCIACMGVSVGEGLLM) and 45 to 65 (FLGVAFIEGTFFVTLVFSFII).

It belongs to the ATPase C chain family. As to quaternary structure, F-type ATPases have 2 components, F(1) - the catalytic core - and F(0) - the membrane proton channel. F(1) has five subunits: alpha(3), beta(3), gamma(1), delta(1), epsilon(1). F(0) has three main subunits: a(1), b(2) and c(10-14). The alpha and beta chains form an alternating ring which encloses part of the gamma chain. F(1) is attached to F(0) by a central stalk formed by the gamma and epsilon chains, while a peripheral stalk is formed by the delta and b chains.

It localises to the cell membrane. In terms of biological role, f(1)F(0) ATP synthase produces ATP from ADP in the presence of a proton or sodium gradient. F-type ATPases consist of two structural domains, F(1) containing the extramembraneous catalytic core and F(0) containing the membrane proton channel, linked together by a central stalk and a peripheral stalk. During catalysis, ATP synthesis in the catalytic domain of F(1) is coupled via a rotary mechanism of the central stalk subunits to proton translocation. Functionally, key component of the F(0) channel; it plays a direct role in translocation across the membrane. A homomeric c-ring of between 10-14 subunits forms the central stalk rotor element with the F(1) delta and epsilon subunits. This is ATP synthase subunit c from Streptococcus pneumoniae serotype 19F (strain G54).